A 268-amino-acid polypeptide reads, in one-letter code: L-cystine-binding protein TcyA (268 aa).

Positions 1-19 are cleaved as a signal peptide; that stretch reads MKKALLALFMVVSIAALAA. Residue C20 is the site of N-palmitoyl cysteine attachment. The S-diacylglycerol cysteine moiety is linked to residue C20.

Belongs to the bacterial solute-binding protein 3 family. In terms of assembly, the complex is composed of two ATP-binding proteins (TcyC), two transmembrane proteins (TcyB) and a solute-binding protein (TcyA).

The protein resides in the cell membrane. In terms of biological role, part of the ABC transporter complex TcyABC involved in L-cystine import. The sequence is that of L-cystine-binding protein TcyA (tcyA) from Bacillus subtilis (strain 168).